Consider the following 180-residue polypeptide: Zinc finger protein 740 (180 aa).

Positions 1-11 (MMLSQIASKQA) are enriched in polar residues. Residues 1 to 62 (MMLSQIASKQ…KEDDSLAEAS (62 aa)) are disordered. A Glycyl lysine isopeptide (Lys-Gly) (interchain with G-Cter in SUMO2) cross-link involves residue lysine 9. Serine 19 carries the phosphoserine modification. Positions 31 to 56 (CKPRFDLSSKGHRKDSDKSRNRKEDD) are enriched in basic and acidic residues. 2 consecutive C2H2-type zinc fingers follow at residues 88–110 (FICE…VLIH) and 116–138 (FECD…KRVH). The segment at 144–166 (YQCERCHQCFSRTDRLLRHKRMC) adopts a C2H2-type 3; atypical zinc-finger fold.

This sequence belongs to the krueppel C2H2-type zinc-finger protein family.

Its subcellular location is the nucleus. In terms of biological role, may be involved in transcriptional regulation. The chain is Zinc finger protein 740 (Znf740) from Mus musculus (Mouse).